A 487-amino-acid chain; its full sequence is Kynureninase 1 (487 aa).

Pyridoxal 5'-phosphate is bound by residues L149, T150, 177-180, S234, D263, H266, and Y288; that span reads FPSD. N6-(pyridoxal phosphate)lysine is present on K289. Residues W329 and N357 each coordinate pyridoxal 5'-phosphate.

The protein belongs to the kynureninase family. Homodimer. It depends on pyridoxal 5'-phosphate as a cofactor.

The protein resides in the cytoplasm. The catalysed reaction is L-kynurenine + H2O = anthranilate + L-alanine + H(+). The enzyme catalyses 3-hydroxy-L-kynurenine + H2O = 3-hydroxyanthranilate + L-alanine + H(+). The protein operates within amino-acid degradation; L-kynurenine degradation; L-alanine and anthranilate from L-kynurenine: step 1/1. It functions in the pathway cofactor biosynthesis; NAD(+) biosynthesis; quinolinate from L-kynurenine: step 2/3. In terms of biological role, catalyzes the cleavage of L-kynurenine (L-Kyn) and L-3-hydroxykynurenine (L-3OHKyn) into anthranilic acid (AA) and 3-hydroxyanthranilic acid (3-OHAA), respectively. This chain is Kynureninase 1 (bna5-1), found in Emericella nidulans (strain FGSC A4 / ATCC 38163 / CBS 112.46 / NRRL 194 / M139) (Aspergillus nidulans).